Here is a 166-residue protein sequence, read N- to C-terminus: Urease accessory protein UreE (166 aa).

It belongs to the UreE family.

The protein localises to the cytoplasm. In terms of biological role, involved in urease metallocenter assembly. Binds nickel. Probably functions as a nickel donor during metallocenter assembly. The sequence is that of Urease accessory protein UreE from Pseudomonas savastanoi pv. phaseolicola (strain 1448A / Race 6) (Pseudomonas syringae pv. phaseolicola (strain 1448A / Race 6)).